Here is an 822-residue protein sequence, read N- to C-terminus: Penicillin-binding protein 1A (822 aa).

Over 1–5 (MRLLK) the chain is Cytoplasmic. Residues 6 to 26 (FLWWTCVTLICGVLLSFSGAY) traverse the membrane as a helical; Signal-anchor for type II membrane protein segment. At 27–822 (LYLSPSLPSV…DDEGAPIDLF (796 aa)) the chain is on the periplasmic side. Residues 48-216 (LKVYSEDGKL…SRYNPLVNPT (169 aa)) form a transglycosylase region. Glu-86 (proton donor; for transglycosylase activity) is an active-site residue. Residues 403 to 744 (IRVQRQEDGT…GTVALPIWIR (342 aa)) form a transpeptidase region. Ser-461 functions as the Acyl-ester intermediate; for transpeptidase activity in the catalytic mechanism. Disordered stretches follow at residues 614 to 654 (AADA…FEPT) and 790 to 822 (KNED…IDLF). The segment covering 812-822 (PDDEGAPIDLF) has biased composition (acidic residues).

The protein in the N-terminal section; belongs to the glycosyltransferase 51 family. It in the C-terminal section; belongs to the transpeptidase family.

The protein localises to the cell inner membrane. It catalyses the reaction [GlcNAc-(1-&gt;4)-Mur2Ac(oyl-L-Ala-gamma-D-Glu-L-Lys-D-Ala-D-Ala)](n)-di-trans,octa-cis-undecaprenyl diphosphate + beta-D-GlcNAc-(1-&gt;4)-Mur2Ac(oyl-L-Ala-gamma-D-Glu-L-Lys-D-Ala-D-Ala)-di-trans,octa-cis-undecaprenyl diphosphate = [GlcNAc-(1-&gt;4)-Mur2Ac(oyl-L-Ala-gamma-D-Glu-L-Lys-D-Ala-D-Ala)](n+1)-di-trans,octa-cis-undecaprenyl diphosphate + di-trans,octa-cis-undecaprenyl diphosphate + H(+). It carries out the reaction Preferential cleavage: (Ac)2-L-Lys-D-Ala-|-D-Ala. Also transpeptidation of peptidyl-alanyl moieties that are N-acyl substituents of D-alanine.. Its pathway is cell wall biogenesis; peptidoglycan biosynthesis. Functionally, cell wall formation. Synthesis of cross-linked peptidoglycan from the lipid intermediates. The enzyme has a penicillin-insensitive transglycosylase N-terminal domain (formation of linear glycan strands) and a penicillin-sensitive transpeptidase C-terminal domain (cross-linking of the peptide subunits). The protein is Penicillin-binding protein 1A (mrcA) of Pseudomonas aeruginosa (strain ATCC 15692 / DSM 22644 / CIP 104116 / JCM 14847 / LMG 12228 / 1C / PRS 101 / PAO1).